We begin with the raw amino-acid sequence, 148 residues long: ATP synthase epsilon chain (148 aa).

This sequence belongs to the ATPase epsilon chain family. F-type ATPases have 2 components, CF(1) - the catalytic core - and CF(0) - the membrane proton channel. CF(1) has five subunits: alpha(3), beta(3), gamma(1), delta(1), epsilon(1). CF(0) has three main subunits: a, b and c.

The protein localises to the cell membrane. Functionally, produces ATP from ADP in the presence of a proton gradient across the membrane. This is ATP synthase epsilon chain from Streptococcus thermophilus (strain ATCC BAA-250 / LMG 18311).